Reading from the N-terminus, the 310-residue chain is Manganese ABC transporter substrate-binding lipoprotein PsaA (310 aa).

Positions 1-20 (MKKIASVLALFVALLFGLLA) are cleaved as a signal peptide. Cys-21 is lipidated: N-palmitoyl cysteine. Cys-21 is lipidated: S-diacylglycerol cysteine. Mn(2+)-binding residues include His-68, His-140, Glu-206, and Asp-281.

This sequence belongs to the bacterial solute-binding protein 9 family. Lipoprotein receptor antigen (Lrai) subfamily.

The protein resides in the cell membrane. In terms of biological role, part of the ATP-binding cassette (ABC) transport system PsaABC involved in manganese import. Binds manganese with high affinity and specificity and delivers it to the membrane permease for translocation into the cytoplasm. Also acts as an adhesin which is involved on adherence to extracellular matrix. This is Manganese ABC transporter substrate-binding lipoprotein PsaA from Streptococcus pneumoniae.